The sequence spans 73 residues: Large ribosomal subunit protein uL29 (73 aa).

Belongs to the universal ribosomal protein uL29 family.

The polypeptide is Large ribosomal subunit protein uL29 (Synechococcus sp. (strain JA-2-3B'a(2-13)) (Cyanobacteria bacterium Yellowstone B-Prime)).